The chain runs to 446 residues: tRNA modification GTPase MnmE (446 aa).

Arg-24, Glu-81, and Lys-120 together coordinate (6S)-5-formyl-5,6,7,8-tetrahydrofolate. The region spanning 216–368 (GLHAVLIGPP…LHIRLRALAL (153 aa)) is the TrmE-type G domain. Residue Asn-226 participates in K(+) binding. Residues 226-231 (NAGKSS), 245-251 (TDVAGTT), and 270-273 (DTAG) each bind GTP. Ser-230 is a Mg(2+) binding site. The K(+) site is built by Thr-245, Val-247, and Thr-250. Thr-251 is a Mg(2+) binding site. Residue Lys-446 coordinates (6S)-5-formyl-5,6,7,8-tetrahydrofolate.

It belongs to the TRAFAC class TrmE-Era-EngA-EngB-Septin-like GTPase superfamily. TrmE GTPase family. Homodimer. Heterotetramer of two MnmE and two MnmG subunits. K(+) serves as cofactor.

Its subcellular location is the cytoplasm. Exhibits a very high intrinsic GTPase hydrolysis rate. Involved in the addition of a carboxymethylaminomethyl (cmnm) group at the wobble position (U34) of certain tRNAs, forming tRNA-cmnm(5)s(2)U34. The polypeptide is tRNA modification GTPase MnmE (Xanthomonas euvesicatoria pv. vesicatoria (strain 85-10) (Xanthomonas campestris pv. vesicatoria)).